Reading from the N-terminus, the 422-residue chain is Synaptotagmin-15 (422 aa).

Over 1-4 (MAEQ) the chain is Extracellular. The chain crosses the membrane as a helical; Signal-anchor for type III membrane protein span at residues 5 to 27 (LALVIGCIIGGLLLLIGISCCLW). The Cytoplasmic portion of the chain corresponds to 28-422 (KRLCTTFTYE…WHALCRPMEP (395 aa)). C2 domains follow at residues 148-267 (CLGR…VIWR) and 279-400 (EFGD…EHWN).

It belongs to the synaptotagmin family. As to quaternary structure, homodimer.

It localises to the membrane. May be involved in the trafficking and exocytosis of secretory vesicles in non-neuronal tissues. The protein is Synaptotagmin-15 (Syt15) of Rattus norvegicus (Rat).